The chain runs to 112 residues: Putative pterin-4-alpha-carbinolamine dehydratase (112 aa).

The protein belongs to the pterin-4-alpha-carbinolamine dehydratase family.

It catalyses the reaction (4aS,6R)-4a-hydroxy-L-erythro-5,6,7,8-tetrahydrobiopterin = (6R)-L-erythro-6,7-dihydrobiopterin + H2O. This Shewanella denitrificans (strain OS217 / ATCC BAA-1090 / DSM 15013) protein is Putative pterin-4-alpha-carbinolamine dehydratase.